Here is a 309-residue protein sequence, read N- to C-terminus: Zinc finger CCCH domain-containing protein 31 (309 aa).

The segment at 1–36 (MEGAGAARKRSRPDTANGGAAGGKRSRETESFQTGL) is disordered. C3H1-type zinc fingers lie at residues 37-65 (SSKLKPCTKFFSTIGCPFGEGCHFSHFVP) and 103-131 (SGKTRMCTKYNTAEGCKFGDKCHFAHGER). The interval 86–106 (ARAPMDHAAGGNSHPASSGKT) is disordered. Positions 175-239 (SATAKISVDA…DQIKQASNMV (65 aa)) constitute a KH domain. The interval 249–273 (STPAKKPAGSAAGAAPAGRGGPGGR) is disordered. Over residues 251-265 (PAKKPAGSAAGAAPA) the composition is skewed to low complexity. The C3H1-type 3 zinc finger occupies 275-302 (NYKTKLCENFVKGTCTFGDRCHFAHGEN).

The sequence is that of Zinc finger CCCH domain-containing protein 31 from Oryza sativa subsp. japonica (Rice).